The primary structure comprises 439 residues: Na(+)/H(+) antiporter NhaA 1 (439 aa).

The next 11 helical transmembrane spans lie at 14–34, 60–80, 98–118, 127–147, 156–176, 179–199, 213–233, 303–323, 335–355, 375–395, and 408–428; these read ITGG…ANLA, ISLH…FIGL, ALPL…YYFF, GWGI…AMVG, IFLS…IAIF, EQIF…LAVA, IGLI…TIAG, HPIS…GVIV, IVLG…FLFA, IIGT…ISDL, and VAVL…LISA.

Belongs to the NhaA Na(+)/H(+) (TC 2.A.33) antiporter family.

It localises to the cell inner membrane. The enzyme catalyses Na(+)(in) + 2 H(+)(out) = Na(+)(out) + 2 H(+)(in). Its function is as follows. Na(+)/H(+) antiporter that extrudes sodium in exchange for external protons. The polypeptide is Na(+)/H(+) antiporter NhaA 1 (Psychromonas ingrahamii (strain DSM 17664 / CCUG 51855 / 37)).